Here is a 369-residue protein sequence, read N- to C-terminus: Biglycan (369 aa).

The signal sequence occupies residues 1–16; sequence MCPLWLLAALLALSQA. The propeptide occupies 17–37; it reads LPFEQKAFWDFTLDDGLPMLN. Residues S42 and S48 are each glycosylated (O-linked (Xyl...) (glycosaminoglycan) serine). Intrachain disulfides connect C64/C70 and C68/C77. LRR repeat units follow at residues 83–103, 104–127, 128–151, 152–172, 173–196, 197–221, 222–242, 243–266, 267–290, 291–313, 314–343, and 344–369; these read KAVP…NNDI, SELR…NNKI, SKIH…KNHL, VEIP…DNRI, RKVP…GNPL, ENSG…EAKL, TGIP…HNKI, QAIE…HNQI, RMIE…NNKL, SRVP…TNNI, TKVG…NNPV, and PYWE…NYKK. 2 N-linked (GlcNAc...) asparagine glycosylation sites follow: N271 and N312. C322 and C355 are joined by a disulfide.

This sequence belongs to the small leucine-rich proteoglycan (SLRP) family. SLRP class I subfamily. Homodimer. Forms a ternary complex with MFAP2 and ELN. Post-translationally, the two attached glycosaminoglycan chains can be either chondroitin sulfate or dermatan sulfate. Found in several connective tissues, especially in articular cartilages.

It localises to the secreted. It is found in the extracellular space. The protein localises to the extracellular matrix. In terms of biological role, may be involved in collagen fiber assembly. The polypeptide is Biglycan (BGN) (Ovis aries (Sheep)).